A 96-amino-acid polypeptide reads, in one-letter code: Neurotoxin beta-KTx 31.1 (96 aa).

A signal peptide spans 1 to 21 (MQAKRTILLLLLLGMVALSSC). Residues 22–29 (GLREKHVQ) constitute a propeptide that is removed on maturation. One can recognise a BetaSPN-type CS-alpha/beta domain in the interval 56-93 (QYGCPIIKDYCSFHCNDLEKHEGYCHGTKCKCNIPNQY). Cystine bridges form between Cys-59/Cys-80, Cys-66/Cys-85, and Cys-70/Cys-87.

It belongs to the long chain scorpion toxin family. Class 1 subfamily. In terms of tissue distribution, expressed by the venom gland.

It localises to the secreted. In terms of biological role, inhibits voltage-gated potassium channel. The protein is Neurotoxin beta-KTx 31.1 of Lychas mucronatus (Chinese swimming scorpion).